The sequence spans 312 residues: Olfactory receptor 10K2 (312 aa).

The Extracellular portion of the chain corresponds to 1–25; that stretch reads MERVNETVVREVIFLGFSSLARLQQ. N5 is a glycosylation site (N-linked (GlcNAc...) asparagine). A helical transmembrane segment spans residues 26-46; that stretch reads LLFVIFLLLYLFTLGTNAIII. Residues 47-54 lie on the Cytoplasmic side of the membrane; sequence STIVLDRA. Residues 55–75 traverse the membrane as a helical segment; the sequence is LHIPMYFFLAILSCSEICYTF. Residues 76 to 99 are Extracellular-facing; the sequence is IIVPKMLVDLLSQKKTISFLGCAI. A helical membrane pass occupies residues 100 to 120; the sequence is QMFSFLFLGCSHSFLLAVMGY. At 121–139 the chain is on the cytoplasmic side; sequence DRYIAICNPLRYSVLMGHG. A helical transmembrane segment spans residues 140 to 160; it reads VCMGLVAAACACGFTVAQIIT. At 161–197 the chain is on the extracellular side; sequence SLVFHLPFYSSNQLHHFFCDIAPVLKLASHHNHFSQI. The chain crosses the membrane as a helical span at residues 198 to 217; sequence VIFMLCTLVLAIPLLLILVS. Over 218 to 237 the chain is Cytoplasmic; sequence YVHILSAILQFPSTLGRCKA. The helical transmembrane segment at 238-258 threads the bilayer; the sequence is FSTCVSHLIIVTVHYGCASFI. At 259 to 271 the chain is on the extracellular side; it reads YLRPQSNYSSSQD. N265 carries N-linked (GlcNAc...) asparagine glycosylation. Residues 272 to 292 form a helical membrane-spanning segment; it reads ALISVSYTIITPLFNPMIYSL. At 293-312 the chain is on the cytoplasmic side; sequence RNKEFKSALCKIVRRTISLL.

This sequence belongs to the G-protein coupled receptor 1 family.

It localises to the cell membrane. In terms of biological role, odorant receptor. In Homo sapiens (Human), this protein is Olfactory receptor 10K2 (OR10K2).